Consider the following 687-residue polypeptide: Auxin response factor 14 (687 aa).

Positions 133 to 235 (FCKTLTASDT…QLRLGVRRAV (103 aa)) form a DNA-binding region, TF-B3.

Belongs to the ARF family. As to quaternary structure, homo and heterodimers. Expressed in roots, culms, leaves and young panicles.

The protein resides in the nucleus. Functionally, auxin response factors (ARFs) are transcriptional factors that bind specifically to the DNA sequence 5'-TGTCTC-3' found in the auxin-responsive promoter elements (AuxREs). The sequence is that of Auxin response factor 14 (ARF14) from Oryza sativa subsp. japonica (Rice).